The following is a 465-amino-acid chain: Catalase cnsD (465 aa).

Residue His39 is part of the active site. Position 331 (Tyr331) interacts with heme.

It belongs to the catalase family. Heme serves as cofactor.

The protein operates within alkaloid biosynthesis. Its function is as follows. Catalase; part of the gene cluster that mediates the biosynthesis of communesins, a prominent class of indole alkaloids with great potential as pharmaceuticals. Communesins are biosynthesized by the coupling of tryptamine and aurantioclavine, two building blocks derived from L-tryptophan. The L-tryptophan decarboxylase cnsB converts L-tryptophan to tryptamine, whereas the tryptophan dimethylallyltransferase cnsF converts L-tryptophan to 4-dimethylallyl tryptophan which is further transformed to aurantioclavine by the aurantioclavine synthase cnsA, probably aided by the catalase cnsD. The cytochrome P450 monooxygenase cnsC catalyzes the heterodimeric coupling between the two different indole moieties, tryptamine and aurantioclavine, to construct vicinal quaternary stereocenters and yield the heptacyclic communesin scaffold. The O-methyltransferase cnsE then methylates the communesin scaffold to produce communesin K, the simplest characterized communesin that contains the heptacyclic core. The dioxygenase cnsJ converts communesin K into communesin I. Acylation to introduce the hexadienyl group at position N16 of communesin I by the acyltransferase cnsK leads to the production of communesin B. The hexadienyl group is produced by the highly reducing polyketide synthase cnsI, before being hydrolytically removed from cnsI by the serine hydrolase cnsH, converted into hexadienyl-CoA by the CoA ligase cnsG, and then transferred to communesin I by cnsK. Surprisingly, cnsK may also be a promiscuous acyltransferase that can tolerate a range of acyl groups, including acetyl-, propionyl-, and butyryl-CoA, which lead to communesins A, G and H respectively. The roles of the alpha-ketoglutarate-dependent dioxygenases cnsM and cnsP have still to be determined. In Penicillium expansum (Blue mold rot fungus), this protein is Catalase cnsD.